A 233-amino-acid chain; its full sequence is Putative nosiheptide resistance regulatory protein (233 aa).

A DNA-binding region (H-T-H motif) is located at residues 93-112; that stretch reads RKAARQAADYSRPMIEQAVA. The disordered stretch occupies residues 190 to 233; sequence PPEATEVPESGRLTSVDGSAEAVLDPEVQAKEAAEEAAKRDDQA. Residues 217-233 are compositionally biased toward basic and acidic residues; the sequence is VQAKEAAEEAAKRDDQA.

Functionally, seems to be involved in the regulation of nhs expression. This chain is Putative nosiheptide resistance regulatory protein, found in Streptomyces actuosus.